The following is a 142-amino-acid chain: Small ribosomal subunit protein uS12 (142 aa).

The disordered stretch occupies residues M1–Q44. Over residues L11–R27 the composition is skewed to basic and acidic residues.

The protein belongs to the universal ribosomal protein uS12 family. As to quaternary structure, part of the 30S ribosomal subunit.

Its function is as follows. With S4 and S5 plays an important role in translational accuracy. Located at the interface of the 30S and 50S subunits. This chain is Small ribosomal subunit protein uS12, found in Natronomonas pharaonis (strain ATCC 35678 / DSM 2160 / CIP 103997 / JCM 8858 / NBRC 14720 / NCIMB 2260 / Gabara) (Halobacterium pharaonis).